The chain runs to 544 residues: CTP synthase (544 aa).

The tract at residues 1–266 (MKYIFVTGGV…GKAVEELLGL (266 aa)) is amidoligase domain. Serine 12 contributes to the CTP binding site. UTP is bound at residue serine 12. 13 to 18 (SLGKGV) lines the ATP pocket. Tyrosine 53 contacts L-glutamine. Residue aspartate 70 coordinates ATP. Residues aspartate 70 and glutamate 140 each coordinate Mg(2+). Residues 147–149 (DIE), 187–192 (KTKPTQ), and lysine 223 contribute to the CTP site. UTP contacts are provided by residues 187-192 (KTKPTQ) and lysine 223. The Glutamine amidotransferase type-1 domain occupies 291–544 (TIAIAGKYTA…VKAALEHQQQ (254 aa)). Glycine 356 provides a ligand contact to L-glutamine. Cysteine 383 (nucleophile; for glutamine hydrolysis) is an active-site residue. Residues 384-387 (LGMQ), glutamate 407, and arginine 467 each bind L-glutamine. Active-site residues include histidine 517 and glutamate 519.

It belongs to the CTP synthase family. In terms of assembly, homotetramer.

The catalysed reaction is UTP + L-glutamine + ATP + H2O = CTP + L-glutamate + ADP + phosphate + 2 H(+). It carries out the reaction L-glutamine + H2O = L-glutamate + NH4(+). The enzyme catalyses UTP + NH4(+) + ATP = CTP + ADP + phosphate + 2 H(+). The protein operates within pyrimidine metabolism; CTP biosynthesis via de novo pathway; CTP from UDP: step 2/2. With respect to regulation, allosterically activated by GTP, when glutamine is the substrate; GTP has no effect on the reaction when ammonia is the substrate. The allosteric effector GTP functions by stabilizing the protein conformation that binds the tetrahedral intermediate(s) formed during glutamine hydrolysis. Inhibited by the product CTP, via allosteric rather than competitive inhibition. Its function is as follows. Catalyzes the ATP-dependent amination of UTP to CTP with either L-glutamine or ammonia as the source of nitrogen. Regulates intracellular CTP levels through interactions with the four ribonucleotide triphosphates. This chain is CTP synthase, found in Deinococcus radiodurans (strain ATCC 13939 / DSM 20539 / JCM 16871 / CCUG 27074 / LMG 4051 / NBRC 15346 / NCIMB 9279 / VKM B-1422 / R1).